A 303-amino-acid polypeptide reads, in one-letter code: Caspase-7 (303 aa).

Positions 1 to 21 (MADDQGCIEEQGVEDSANEDS) are enriched in acidic residues. The segment at 1–30 (MADDQGCIEEQGVEDSANEDSVDAKPDRSS) is disordered. Ala2 carries the N-acetylalanine modification. Residues 2 to 23 (ADDQGCIEEQGVEDSANEDSVD) constitute a propeptide, N-terminally processed. Position 30 is a phosphoserine; by PAK2 (Ser30). Ser37 is modified (phosphoserine). Residues 38–41 (KKKK) form an exosite region. Residues 76–87 (KNFDKVTGMGVR) form a loop L1 region. The active site involves His144. A Phosphothreonine; by PAK2 modification is found at Thr173. Cys186 is an active-site residue. Residues 187–196 (RGTELDDGIQ) form a loop L2 region. Positions 199 to 206 (SGPINDTD) are excised as a propeptide. The interval 226-238 (VPGYYSWRSPGRG) is loop L3. A (Microbial infection) ADP-riboxanated arginine modification is found at Arg233. The residue at position 239 (Ser239) is a Phosphoserine; by PAK2. The tract at residues 274–288 (ESQSDDPHFHEKKQI) is loop L4.

Belongs to the peptidase C14A family. As to quaternary structure, heterotetramer that consists of two anti-parallel arranged heterodimers, each one formed by a 20 kDa (p20) and a 11 kDa (p11) subunit. Interacts with XIAP (via its second BIR domain); inhibiting CASP7 activity. Interacts with BIRC6/bruce. Interacts with ATXN3 (short isoform 1). Interacts with HSPA5. In terms of processing, cleavage by different proteases, such as granzyme B (GZMB), caspase-1 (CASP1), caspase-8 (CASP8), caspase-9 (CASP9) or caspase-10 (CASP10) generate the two active subunits. Its involvement in different programmed cell death processes is probably specified by the protease that activates CASP7. Cleaved and activated by initiator caspases (CASP8, CASP9 and/or CASP10), leading to execution phase of apoptosis. Cleavage and maturation by GZMB regulates granzyme-mediated programmed cell death. Cleaved and activated by CASP1 in response to bacterial infection. Propeptide domains can also be cleaved efficiently by CASP3. Active heterodimers between the small subunit of caspase-7 and the large subunit of CASP3, and vice versa, also occur. Also cleaved at the N-terminus at alternative sites by CAPN1, leading to its activation. Phosphorylation at Ser-30 and Ser-239 by PAK2 inhibits its activity. Phosphorylation at Ser-30 prevents cleavage and activation by initiator caspase CASP9, while phosphorylation at Ser-239 prevents thiol protease activity by preventing substrate-binding. Post-translationally, (Microbial infection) ADP-riboxanation by C.violaceum CopC blocks CASP7 processing, preventing CASP7 activation and ability to recognize and cleave substrates. In terms of processing, ubiquitinated by BIRC6; this activity is inhibited by DIABLO/SMAC. In terms of tissue distribution, highly expressed in lung, skeletal muscle, liver, kidney, spleen and heart, and moderately in testis. No expression in the brain.

It is found in the cytoplasm. The protein resides in the cytosol. It localises to the nucleus. Its subcellular location is the secreted. The protein localises to the extracellular space. It catalyses the reaction Strict requirement for an Asp residue at position P1 and has a preferred cleavage sequence of Asp-Glu-Val-Asp-|-.. Its activity is regulated as follows. During activation, the N-terminal disordered prodomain is removed by cleavage. Concomitantly, double cleavage gives rise to a large Caspase-7 subunit p20 and a small Caspase-7 subunit p11. The two large and two small subunits then assemble to form the active CASP7 complex. Can be cleaved and activated by different caspases, depending on the context. Cleaved and activated by initiator caspases (CASP8, CASP9 and/or CASP10), leading to execution phase of apoptosis. Inhibited by XIAP, which directly binds to the active site pocket and obstructs substrate entry. Cleavage and maturation by GZMB regulates granzyme-mediated programmed cell death. Cleavage and maturation by CASP1 regulates pyroptosis. Phosphorylation at Ser-30 and Ser-239 by PAK2 inhibits its activity. Inhibited by isatin sulfonamides. Inhibited by 2-(2,4-Dichlorophenoxy)- N-(2-mercapto-ethyl)-acetamide (DICA) and 5-Fluoro-1H-indole-2- carboxylic acid (2-mercapto-ethyl)-amide (FICA) allosteric inhibitors, which disrupt an interaction between Arg-187 and Tyr-223. Specifically inhibited by DARPin D7.18 and D7.43, which specifically bind to the precursor CASP7 and prevent its processing and activation. Inhibited by BIRC6; following inhibition of BIRC6-caspase binding by DIABLO/SMAC, BIRC6 is subjected to caspase cleavage, leading to an increase in active caspases. Functionally, thiol protease involved in different programmed cell death processes, such as apoptosis, pyroptosis or granzyme-mediated programmed cell death, by proteolytically cleaving target proteins. Has a marked preference for Asp-Glu-Val-Asp (DEVD) consensus sequences, with some plasticity for alternate non-canonical sequences. Its involvement in the different programmed cell death processes is probably determined by upstream proteases that activate CASP7. Acts as an effector caspase involved in the execution phase of apoptosis: following cleavage and activation by initiator caspases (CASP8, CASP9 and/or CASP10), mediates execution of apoptosis by catalyzing cleavage of proteins, such as CLSPN, PARP1, PTGES3 and YY1. Compared to CASP3, acts as a minor executioner caspase and cleaves a limited set of target proteins. Acts as a key regulator of the inflammatory response in response to bacterial infection by catalyzing cleavage and activation of the sphingomyelin phosphodiesterase SMPD1 in the extracellular milieu, thereby promoting membrane repair. Regulates pyroptosis in intestinal epithelial cells: cleaved and activated by CASP1 in response to S.typhimurium infection, promoting its secretion to the extracellular milieu, where it catalyzes activation of SMPD1, generating ceramides that repair membranes and counteract the action of gasdermin-D (GSDMD) pores. Regulates granzyme-mediated programmed cell death in hepatocytes: cleaved and activated by granzyme B (GZMB) in response to bacterial infection, promoting its secretion to the extracellular milieu, where it catalyzes activation of SMPD1, generating ceramides that repair membranes and counteract the action of perforin (PRF1) pores. Following cleavage by CASP1 in response to inflammasome activation, catalyzes processing and inactivation of PARP1, alleviating the transcription repressor activity of PARP1. Acts as an inhibitor of type I interferon production during virus-induced apoptosis by mediating cleavage of antiviral proteins CGAS, IRF3 and MAVS, thereby preventing cytokine overproduction. Cleaves and activates sterol regulatory element binding proteins (SREBPs). Cleaves phospholipid scramblase proteins XKR4, XKR8 and XKR9. In case of infection, catalyzes cleavage of Kaposi sarcoma-associated herpesvirus protein ORF57, thereby preventing expression of viral lytic genes. Cleaves BIRC6 following inhibition of BIRC6-caspase binding by DIABLO/SMAC. In terms of biological role, lacks enzymatic activity. The chain is Caspase-7 from Homo sapiens (Human).